The chain runs to 795 residues: Phenylalanine--tRNA ligase beta subunit (795 aa).

The tRNA-binding domain maps to 39 to 148 (AGSFHGVVVG…ADAPIGTDIR (110 aa)). One can recognise a B5 domain in the interval 401–476 (PKRATITLRR…RVYGYNNIPD (76 aa)). Mg(2+)-binding residues include D454, D460, E463, and E464. One can recognise an FDX-ACB domain in the interval 701 to 794 (SRFPANRRDI…LKERFQASLR (94 aa)).

The protein belongs to the phenylalanyl-tRNA synthetase beta subunit family. Type 1 subfamily. Tetramer of two alpha and two beta subunits. The cofactor is Mg(2+).

It is found in the cytoplasm. It catalyses the reaction tRNA(Phe) + L-phenylalanine + ATP = L-phenylalanyl-tRNA(Phe) + AMP + diphosphate + H(+). The sequence is that of Phenylalanine--tRNA ligase beta subunit from Shigella dysenteriae serotype 1 (strain Sd197).